The primary structure comprises 175 residues: Large ribosomal subunit protein uL16 (175 aa).

This sequence belongs to the universal ribosomal protein uL16 family.

This Metallosphaera sedula (strain ATCC 51363 / DSM 5348 / JCM 9185 / NBRC 15509 / TH2) protein is Large ribosomal subunit protein uL16.